The primary structure comprises 156 residues: Small ribosomal subunit protein uS7 (156 aa).

This sequence belongs to the universal ribosomal protein uS7 family. In terms of assembly, part of the 30S ribosomal subunit. Contacts proteins S9 and S11.

Its function is as follows. One of the primary rRNA binding proteins, it binds directly to 16S rRNA where it nucleates assembly of the head domain of the 30S subunit. Is located at the subunit interface close to the decoding center, probably blocks exit of the E-site tRNA. The protein is Small ribosomal subunit protein uS7 of Hamiltonella defensa subsp. Acyrthosiphon pisum (strain 5AT).